We begin with the raw amino-acid sequence, 52 residues long: Insulin (52 aa).

Disulfide bonds link Cys-7–Cys-38, Cys-19–Cys-51, and Cys-37–Cys-42.

The protein belongs to the insulin family. In terms of assembly, heterodimer of a B chain and an A chain linked by two disulfide bonds.

Its subcellular location is the secreted. Its function is as follows. Insulin decreases blood glucose concentration. It increases cell permeability to monosaccharides, amino acids and fatty acids. It accelerates glycolysis, the pentose phosphate cycle, and glycogen synthesis in liver. The polypeptide is Insulin (ins) (Acipenser gueldenstaedtii (Russian sturgeon)).